Consider the following 314-residue polypeptide: Vacuolar membrane protein SCY_4732 (314 aa).

Residues 32 to 61 (KPTSSVVSETSSKSLPSLTSSAFSTSSGTT) are disordered. Residues 93-113 (VYIAVGAVIGAIFISILIWWL) traverse the membrane as a helical segment. A phosphoserine mark is found at Ser-148, Ser-254, and Ser-274. The segment at 240 to 309 (EERKLNLNRP…PSMFLDDVLN (70 aa)) is disordered. Basic and acidic residues predominate over residues 254-269 (SPERKEKKINSMEGYH).

It belongs to the PRM5 family.

Its subcellular location is the vacuole membrane. This is Vacuolar membrane protein SCY_4732 from Saccharomyces cerevisiae (strain YJM789) (Baker's yeast).